A 357-amino-acid polypeptide reads, in one-letter code: IGF-like family receptor 1 (357 aa).

The signal sequence occupies residues 1 to 22; it reads MGPLRLLPTAVLLLAQAAPWEA. The Extracellular segment spans residues 23-160; the sequence is SQHCGRLEYW…HKAPQQAWPS (138 aa). A disordered region spans residues 100–147; that stretch reads IPSGSRGGTGRPCREPVPNKEPCPLTPGKSSILSSQEPSSPGIPSVSW. The segment covering 129–139 has biased composition (low complexity); it reads SSILSSQEPSS. A helical transmembrane segment spans residues 161 to 181; the sequence is LSFALFLVLVLLVTSAIILLA. The Cytoplasmic segment spans residues 182–357; sequence LQRHHRRLDQ…KLGSSGACLA (176 aa).

Its subcellular location is the cell membrane. Its function is as follows. Probable cell membrane receptor for the IGF-like family protein IGFL. This chain is IGF-like family receptor 1 (IGFLR1), found in Bos taurus (Bovine).